The sequence spans 1287 residues: Cell adhesion molecule-related/down-regulated by oncogenes (1287 aa).

The N-terminal stretch at 1–25 is a signal peptide; that stretch reads MHPDLGPLCTLLYVTLTILCSSVSS. Topologically, residues 26–963 are extracellular; it reads DLAPYFTSEP…PATSPARSSD (938 aa). Ig-like C2-type domains follow at residues 29 to 114, 120 to 204, 225 to 303, 310 to 396, and 405 to 516; these read PYFT…ATVS, DFGS…LKVE, PTHS…KYVT, EHAS…GRLE, and PVII…ASLM. Residues C50 and C97 are joined by a disulfide bond. N-linked (GlcNAc...) asparagine glycans are attached at residues N88, N100, N180, N287, N294, N342, and N427. Cystine bridges form between C141-C191 and C243-C290. Intrachain disulfides connect C333/C380 and C426/C500. The tract at residues 531 to 553 is disordered; that stretch reads LPDAAQNDDRSKRDGSETGLLSS. A compositionally biased stretch (basic and acidic residues) spans 537–546; that stretch reads NDDRSKRDGS. N570 carries N-linked (GlcNAc...) asparagine glycosylation. Fibronectin type-III domains lie at 579–677, 723–821, and 826–926; these read APII…SKEK, APDR…FPNR, and PITG…TKVK. A glycan (N-linked (GlcNAc...) asparagine) is linked at N873. Positions 933–955 are disordered; that stretch reads EYPVKDLSTPPNSLGSGGNVGPA. A helical transmembrane segment spans residues 964–984; sequence MLYLIVGCVLGVMVLILMVFI. Residues 985–1287 are Cytoplasmic-facing; that stretch reads AMCLWKNRQQ…TEVLQQPRET (303 aa). The tract at residues 1268 to 1287 is disordered; it reads SPPGIPLDSPTEVLQQPRET.

As to quaternary structure, part of a complex that contains BOC, CDON, NEO1, cadherins and CTNNB1. Interacts with NTN3. Interacts with PTCH1. Interacts with GAS1. Interacts with DHH, IHH and SHH. Post-translationally, N-glycosylated.

It is found in the cell membrane. In terms of biological role, component of a cell-surface receptor complex that mediates cell-cell interactions between muscle precursor cells. Promotes differentiation of myogenic cells. This chain is Cell adhesion molecule-related/down-regulated by oncogenes (CDON), found in Homo sapiens (Human).